The chain runs to 415 residues: Imidazolonepropionase (415 aa).

Residues H76 and H78 each coordinate Fe(3+). Zn(2+) contacts are provided by H76 and H78. 3 residues coordinate 4-imidazolone-5-propanoate: R85, Y148, and H181. Y148 is a binding site for N-formimidoyl-L-glutamate. H246 serves as a coordination point for Fe(3+). H246 lines the Zn(2+) pocket. E249 is a binding site for 4-imidazolone-5-propanoate. D320 contacts Fe(3+). Residue D320 coordinates Zn(2+). Residues N322 and G324 each coordinate N-formimidoyl-L-glutamate. T325 contacts 4-imidazolone-5-propanoate.

The protein belongs to the metallo-dependent hydrolases superfamily. HutI family. Requires Zn(2+) as cofactor. The cofactor is Fe(3+).

It is found in the cytoplasm. It carries out the reaction 4-imidazolone-5-propanoate + H2O = N-formimidoyl-L-glutamate. It functions in the pathway amino-acid degradation; L-histidine degradation into L-glutamate; N-formimidoyl-L-glutamate from L-histidine: step 3/3. Functionally, catalyzes the hydrolytic cleavage of the carbon-nitrogen bond in imidazolone-5-propanoate to yield N-formimidoyl-L-glutamate. It is the third step in the universal histidine degradation pathway. This chain is Imidazolonepropionase, found in Caldanaerobacter subterraneus subsp. tengcongensis (strain DSM 15242 / JCM 11007 / NBRC 100824 / MB4) (Thermoanaerobacter tengcongensis).